A 1396-amino-acid chain; its full sequence is DNA-directed RNA polymerase subunit beta' (1396 aa).

C70, C72, C85, and C88 together coordinate Zn(2+). Positions 460, 462, and 464 each coordinate Mg(2+). Zn(2+) contacts are provided by C814, C888, C895, and C898.

Belongs to the RNA polymerase beta' chain family. The RNAP catalytic core consists of 2 alpha, 1 beta, 1 beta' and 1 omega subunit. When a sigma factor is associated with the core the holoenzyme is formed, which can initiate transcription. Mg(2+) is required as a cofactor. Requires Zn(2+) as cofactor.

It carries out the reaction RNA(n) + a ribonucleoside 5'-triphosphate = RNA(n+1) + diphosphate. Functionally, DNA-dependent RNA polymerase catalyzes the transcription of DNA into RNA using the four ribonucleoside triphosphates as substrates. The protein is DNA-directed RNA polymerase subunit beta' of Chromobacterium violaceum (strain ATCC 12472 / DSM 30191 / JCM 1249 / CCUG 213 / NBRC 12614 / NCIMB 9131 / NCTC 9757 / MK).